The chain runs to 138 residues: Large ribosomal subunit protein uL16 (138 aa).

Basic residues predominate over residues 1–21 (MLIPRKVKHRKQHHPSLRGRA). The segment at 1–22 (MLIPRKVKHRKQHHPSLRGRAK) is disordered.

This sequence belongs to the universal ribosomal protein uL16 family. In terms of assembly, part of the 50S ribosomal subunit.

Binds 23S rRNA and is also seen to make contacts with the A and possibly P site tRNAs. The chain is Large ribosomal subunit protein uL16 from Thermobifida fusca (strain YX).